A 73-amino-acid chain; its full sequence is DNA gyrase inhibitor YacG (73 aa).

Residues C12, C15, C31, and C35 each contribute to the Zn(2+) site. A disordered region spans residues 47-73 (DYAIPGEPIDPAEPSEDRNGAEGPPTD).

This sequence belongs to the DNA gyrase inhibitor YacG family. In terms of assembly, interacts with GyrB. Zn(2+) is required as a cofactor.

Functionally, inhibits all the catalytic activities of DNA gyrase by preventing its interaction with DNA. Acts by binding directly to the C-terminal domain of GyrB, which probably disrupts DNA binding by the gyrase. This is DNA gyrase inhibitor YacG from Methylococcus capsulatus (strain ATCC 33009 / NCIMB 11132 / Bath).